Reading from the N-terminus, the 233-residue chain is 5'-methylthioadenosine/S-adenosylhomocysteine nucleosidase (233 aa).

Glutamate 12 (proton acceptor) is an active-site residue. Residues glycine 78, isoleucine 156, and 177–178 contribute to the substrate site; that span reads ME. The active-site Proton donor is the aspartate 201.

The protein belongs to the PNP/UDP phosphorylase family. MtnN subfamily.

The enzyme catalyses S-adenosyl-L-homocysteine + H2O = S-(5-deoxy-D-ribos-5-yl)-L-homocysteine + adenine. It carries out the reaction S-methyl-5'-thioadenosine + H2O = 5-(methylsulfanyl)-D-ribose + adenine. It catalyses the reaction 5'-deoxyadenosine + H2O = 5-deoxy-D-ribose + adenine. Its pathway is amino-acid biosynthesis; L-methionine biosynthesis via salvage pathway; S-methyl-5-thio-alpha-D-ribose 1-phosphate from S-methyl-5'-thioadenosine (hydrolase route): step 1/2. In terms of biological role, catalyzes the irreversible cleavage of the glycosidic bond in both 5'-methylthioadenosine (MTA) and S-adenosylhomocysteine (SAH/AdoHcy) to adenine and the corresponding thioribose, 5'-methylthioribose and S-ribosylhomocysteine, respectively. Also cleaves 5'-deoxyadenosine, a toxic by-product of radical S-adenosylmethionine (SAM) enzymes, into 5-deoxyribose and adenine. This chain is 5'-methylthioadenosine/S-adenosylhomocysteine nucleosidase, found in Listeria monocytogenes serotype 4b (strain F2365).